A 2713-amino-acid polypeptide reads, in one-letter code: Histone-lysine N-methyltransferase 2B (2713 aa).

Residues 1–11 (MAAAAGGGSCP) are compositionally biased toward gly residues. Disordered regions lie at residues 1–65 (MAAA…GEDT), 82–524 (RLWA…PTVV), and 542–783 (VSAR…ARVA). N-acetylalanine is present on alanine 2. A compositionally biased stretch (low complexity) spans 12-24 (GPGSARGRFPGRP). Residues 17–36 (RGRFPGRPRGSGGGGGRGGR) carry the Menin-binding motif (MBM) motif. 2 stretches are compositionally biased toward gly residues: residues 25 to 38 (RGSGGGGGRGGRGN) and 49 to 60 (RGGGAAGPGGAE). The a.T hook 1 DNA-binding region spans 37–44 (GNGAERVR). Residues 109-123 (PEEESSDGESEEEEF) show a composition bias toward acidic residues. The a.T hook 2 DNA-binding region spans 110–117 (EEESSDGE). Phosphoserine occurs at positions 113, 114, and 118. Positions 144–158 (QRGRAPRGRGRKHKT) are enriched in basic residues. The segment covering 340-360 (PQRKDGDEPERGSCRKKQEQK) has biased composition (basic and acidic residues). A DNA-binding region (a.T hook 3) is located at residues 357 to 365 (QEQKLEEEE). The segment covering 361 to 393 (LEEEEEEEEKEGEEKEEKDDNEDNNKQEEEEET) has biased composition (acidic residues). The segment covering 394–412 (ERAVAEEEAMLAKEKEEAK) has biased composition (basic and acidic residues). Pro residues predominate over residues 414-460 (PSPPLTPPVPSPPPPLPPPSTSPPPPASPLPPPVSPPPPLSPPPYPA). Over residues 501–517 (GTLSPTPNPSTTTGSPL) the composition is skewed to low complexity. Basic and acidic residues predominate over residues 555 to 566 (RFMDEDPPKPPK). Over residues 577–605 (ATSPPAPQEPVPVSSPPRVPTPPSTPVPL) the composition is skewed to pro residues. Residues 606-617 (PEKRRSILREPT) are compositionally biased toward basic and acidic residues. The span at 627–645 (LPPPPPAPPPAPSPPPAPA) shows a compositional bias: pro residues. Composition is skewed to low complexity over residues 646-657 (TPSRRPLLLRAP), 715-728 (VPVVTSPVKVEVPP), and 738-756 (QQLQLQQPPQALQTQLLPQ). The span at 757-774 (ALPPQQPQAQPPPSPQHT) shows a compositional bias: pro residues. Residue lysine 810 forms a Glycyl lysine isopeptide (Lys-Gly) (interchain with G-Cter in SUMO2) linkage. Phosphoserine occurs at positions 826, 849, and 866. Disordered stretches follow at residues 831-872 (TEEA…QGPR) and 899-964 (SALP…HHGK). The segment covering 841–862 (TPDRGCVRSEDESMEAKRDRAS) has biased composition (basic and acidic residues). The span at 912-922 (EDTSSASETES) shows a compositional bias: low complexity. Phosphoserine is present on serine 941. Over residues 953-964 (TPRRSLPSHHGK) the composition is skewed to basic residues. The CXXC-type zinc finger occupies 964–1011 (KKMRMARCGHCRGCLRVQDCGSCVNCLDKPKFGGPNTKKQCCVYRKCD). Residues cysteine 971, cysteine 974, cysteine 977, cysteine 983, cysteine 986, cysteine 989, cysteine 1005, and cysteine 1010 each coordinate Zn(2+). Disordered regions lie at residues 1032-1076 (LLPW…DSLL) and 1088-1138 (QRPS…LQPV). A phosphoserine mark is found at serine 1037, serine 1040, serine 1098, and serine 1101. Residue lysine 1142 forms a Glycyl lysine isopeptide (Lys-Gly) (interchain with G-Cter in SUMO2) linkage. 3 consecutive PHD-type zinc fingers follow at residues 1207 to 1258 (PMVC…CKFC), 1255 to 1309 (CKFC…CVRC), and 1341 to 1402 (GNYC…CAGA). The region spanning 1410-1510 (ALSGALQGGL…GLLLKLLESA (101 aa)) is the Bromo domain. The segment at 1550–1572 (RQQESETPESGQPPGDPSAAFQS) is disordered. Residues 1584–1624 (PRQCALCLKYGDADSKEAGRLLYIGQNEWTHVNCAIWSAEV) form a C2HC pre-PHD-type zinc finger. Residues 1645–1692 (MRCELCLKPGATVGCCLSSCLSNFHFMCARASYCIFQDDKKVFCQKHT) form a PHD-type 4 zinc finger. The 57-residue stretch at 1733-1789 (VINVLIGSIRINSLGTLSDLSDCEGRLFPIGYQCSRLYWSTVDARRRCWYRCRILEY) folds into the FYR N-terminal domain. The span at 1808–1821 (QTIVHSPTPSSDTD) shows a compositional bias: polar residues. 5 disordered regions span residues 1808–1973 (QTIV…GPDF), 2056–2104 (QLDG…PPED), 2116–2160 (NLGG…RTFA), 2279–2356 (VSTF…RCPL), and 2382–2408 (YSAGEASSSEEEPPSPEDKENQVPKRV). Composition is skewed to low complexity over residues 1872 to 1890 (PLGGVSFGPLPSPGSPSSL) and 1923 to 1933 (RRTSSPLRTSP). A phosphoserine mark is found at serine 1926 and serine 1932. Residues 1939–1950 (LSTSVTALTPTS) show a composition bias toward polar residues. The span at 2058-2068 (DGVDDGTDSEA) shows a compositional bias: acidic residues. Phosphothreonine occurs at positions 2064 and 2079. A compositionally biased stretch (gly residues) spans 2084-2093 (PGVGRGGVLG). A compositionally biased stretch (polar residues) spans 2140 to 2153 (NGSQPPQSLSTSPA). 2 positions are modified to phosphoserine: serine 2286 and serine 2346. Residues 2409-2490 (GPHLRFEISS…QRCQHYKFRY (82 aa)) form the FYR C-terminal domain. The short motif at 2506-2511 (GAARAE) is the WDR5 interaction motif (WIN) element. The SET domain maps to 2573-2689 (EAVGVYRSAI…RGEELTYDYK (117 aa)). Residues histidine 2583, arginine 2585, tyrosine 2627, and 2650–2651 (NH) contribute to the S-adenosyl-L-methionine site. Positions 2653 and 2701 each coordinate Zn(2+). Residues 2697 to 2713 (NKLPCNCGAKRCRRFLN) form the Post-SET domain. Asparagine 2702 serves as a coordination point for S-adenosyl-L-methionine. Zn(2+) contacts are provided by cysteine 2703 and cysteine 2708.

Belongs to the class V-like SAM-binding methyltransferase superfamily. Histone-lysine methyltransferase family. TRX/MLL subfamily. Component of the menin-associated histone methyltransferase complex, at least composed of KMT2B/MLL4, ASH2L, RBBP5, WDR5, DPY30, MEN1; the complex interacts with POLR2A and POLR2B via MEN1. Interacts with NFE2. Interacts with KDM6B. Interacts (via WIN motif) with WDR5. Interacts (via MBM motif) with MEN1.

It is found in the nucleus. It catalyses the reaction L-lysyl(4)-[histone H3] + S-adenosyl-L-methionine = N(6)-methyl-L-lysyl(4)-[histone H3] + S-adenosyl-L-homocysteine + H(+). The catalysed reaction is N(6)-methyl-L-lysyl(4)-[histone H3] + S-adenosyl-L-methionine = N(6),N(6)-dimethyl-L-lysyl(4)-[histone H3] + S-adenosyl-L-homocysteine + H(+). In terms of biological role, histone methyltransferase that catalyzes methyl group transfer from S-adenosyl-L-methionine to the epsilon-amino group of 'Lys-4' of histone H3 (H3K4) via a non-processive mechanism. Part of chromatin remodeling machinery predominantly forms H3K4me1 and H3K4me2 methylation marks at active chromatin sites where transcription and DNA repair take place. Likely plays a redundant role with KMT2C in enriching H3K4me1 marks on primed and active enhancer elements. Plays a central role in beta-globin locus transcription regulation by being recruited by NFE2. Plays an important role in controlling bulk H3K4me during oocyte growth and preimplantation development. Required during the transcriptionally active period of oocyte growth for the establishment and/or maintenance of bulk H3K4 trimethylation (H3K4me3), global transcriptional silencing that preceeds resumption of meiosis, oocyte survival and normal zygotic genome activation. This Mus musculus (Mouse) protein is Histone-lysine N-methyltransferase 2B (Kmt2b).